Reading from the N-terminus, the 571-residue chain is Proline--tRNA ligase (571 aa).

It belongs to the class-II aminoacyl-tRNA synthetase family. ProS type 1 subfamily. In terms of assembly, homodimer.

The protein resides in the cytoplasm. It catalyses the reaction tRNA(Pro) + L-proline + ATP = L-prolyl-tRNA(Pro) + AMP + diphosphate. Its function is as follows. Catalyzes the attachment of proline to tRNA(Pro) in a two-step reaction: proline is first activated by ATP to form Pro-AMP and then transferred to the acceptor end of tRNA(Pro). As ProRS can inadvertently accommodate and process non-cognate amino acids such as alanine and cysteine, to avoid such errors it has two additional distinct editing activities against alanine. One activity is designated as 'pretransfer' editing and involves the tRNA(Pro)-independent hydrolysis of activated Ala-AMP. The other activity is designated 'posttransfer' editing and involves deacylation of mischarged Ala-tRNA(Pro). The misacylated Cys-tRNA(Pro) is not edited by ProRS. The chain is Proline--tRNA ligase from Pseudomonas syringae pv. syringae (strain B728a).